Reading from the N-terminus, the 1069-residue chain is Enteropeptidase (1069 aa).

Residues 1-18 (MKSSRDEAVGHHSISSFE) lie on the Cytoplasmic side of the membrane. A helical; Signal-anchor for type II membrane protein transmembrane segment spans residues 19-47 (VMLSALFIMLMVFSIGLIAVSWLAVKESE). Over 48–1069 (GDAALGKSHE…FIEWIHSFLH (1022 aa)) the chain is Extracellular. An SEA domain is found at 54–169 (KSHEVRGTFK…NSIDITASLS (116 aa)). N147, N197, and N212 each carry an N-linked (GlcNAc...) asparagine glycan. Positions 227–268 (IECQPGSRPCAHAWNCVATDLFCDGEVNCPDGSDEDTGLCAT) constitute an LDL-receptor class A 1 domain. 4 disulfides stabilise this stretch: C229/C242, C236/C255, C249/C266, and C270/C298. The 110-residue stretch at 270–379 (CDGRFLLTGD…IGFNATYSTF (110 aa)) folds into the CUB 1 domain. N-linked (GlcNAc...) asparagine glycans are attached at residues N373, N380, N433, N515, N579, and N675. Residues 387 to 549 (YEKIDCTFDD…ISLTNGICSQ (163 aa)) enclose the MAM domain. An intrachain disulfide couples C569 to C597. The region spanning 569–679 (CGGPFELWEP…KGFKANFTSG (111 aa)) is the CUB 2 domain. The region spanning 686–724 (EPCQDDEFQCKDGNCIPLGNLCDSYPHCRDGSDEASCVR) is the LDL-receptor class A 2 domain. 3 cysteine pairs are disulfide-bonded: C688–C700, C695–C713, and C707–C722. One can recognise an SRCR domain in the interval 723-816 (VRFLNGTRSN…LILLQCNHKS (94 aa)). Residues N727, N751, N770, and N791 are each glycosylated (N-linked (GlcNAc...) asparagine). Intrachain disulfides connect C802-C812, C817-C945, C859-C875, C959-C1027, C991-C1006, and C1017-C1045. A Peptidase S1 domain is found at 830–1069 (IVGGSDAQAG…FIEWIHSFLH (240 aa)). The active-site Charge relay system is H874. N-linked (GlcNAc...) asparagine glycosylation is present at N897. The active-site Charge relay system is the D925. Residues N936 and N999 are each glycosylated (N-linked (GlcNAc...) asparagine). S1021 functions as the Charge relay system in the catalytic mechanism.

This sequence belongs to the peptidase S1 family. In terms of assembly, heterodimer of a catalytic (light) chain and a multidomain (heavy) chain linked by a disulfide bond. Post-translationally, the chains are derived from a single precursor that is cleaved by a trypsin-like protease.

The protein localises to the membrane. The enzyme catalyses Activation of trypsinogen by selective cleavage of 6-Lys-|-Ile-7 bond.. In terms of biological role, responsible for initiating activation of pancreatic proteolytic proenzymes (trypsin, chymotrypsin and carboxypeptidase A). It catalyzes the conversion of trypsinogen to trypsin which in turn activates other proenzymes including chymotrypsinogen, procarboxypeptidases, and proelastases. The sequence is that of Enteropeptidase (Tmprss15) from Mus musculus (Mouse).